Consider the following 480-residue polypeptide: Glucosylglycerol phosphorylase (480 aa).

Asp-190 functions as the Nucleophile in the catalytic mechanism. Residue Tyr-194 participates in substrate binding. The Proton donor role is filled by Glu-231. Gln-336 contacts substrate.

It belongs to the glycosyl hydrolase 13 family. Sucrose phosphorylase subfamily.

The enzyme catalyses 2-O-(alpha-D-glucopyranosyl)glycerol + phosphate = alpha-D-glucose 1-phosphate + glycerol. Catalyzes the reversible phosphorolysis of 2-O-alpha-D-glucosylglycerol with retention of the anomeric configuration, forming alpha-D-glucose 1-phosphate and glycerol. Has most likely a catabolic role, either regulating the intracellular levels of glucosylglycerol, which acts as a compatible solute, or degrading it when the environmental conditions change. Cannot catalyze the phosphorolysis of sucrose or glucosylglycerate. The chain is Glucosylglycerol phosphorylase from Marinobacter adhaerens (strain DSM 23420 / HP15).